The chain runs to 461 residues: Coronin-1A (461 aa).

Position 2 is an N-acetylserine (Ser-2). At Ser-2 the chain carries Phosphoserine; by PKC. 7 WD repeats span residues 13 to 63, 73 to 110, 123 to 160, 164 to 204, 207 to 251, 258 to 296, and 302 to 349; these read HVFG…LVLP, NAPT…MVWE, PVVT…MVWD, GAAM…RIIE, KGTV…ALWD, PLSL…RYFE, and PFLH…EPIA. A compositionally biased stretch (basic and acidic residues) spans 403 to 418; it reads ELRVNRGLDTGRRRAA. Residues 403 to 432 form a disordered region; it reads ELRVNRGLDTGRRRAAPEASGTPSSDAVSR. The residue at position 412 (Thr-412) is a Phosphothreonine; by PKC. Position 422 is a phosphoserine (Ser-422). A coiled-coil region spans residues 424–460; that stretch reads TPSSDAVSRLEEEMRKLQATVQELQKRLDRLEETVQA. At Lys-449 the chain carries N6-acetyllysine.

The protein belongs to the WD repeat coronin family. In terms of assembly, binds actin. Phosphorylation at Thr-412 by PKC strongly down-regulates the association with actin. Post-translationally, polyubiquitinated by RNF128 with 'Lys-48'-linked chains, leading to proteasomal degradation. Expressed in brain, thymus, spleen, bone marrow and lymph node. Low in lung and gut.

The protein resides in the cytoplasm. It localises to the cytoskeleton. It is found in the cell cortex. Its subcellular location is the cytoplasmic vesicle. The protein localises to the phagosome membrane. May be a crucial component of the cytoskeleton of highly motile cells, functioning both in the invagination of large pieces of plasma membrane, as well as in forming protrusions of the plasma membrane involved in cell locomotion. In mycobacteria-infected cells, its retention on the phagosomal membrane prevents fusion between phagosomes and lysosomes. This is Coronin-1A (CORO1A) from Homo sapiens (Human).